Here is a 143-residue protein sequence, read N- to C-terminus: Ribosome maturation factor RimP (143 aa).

It belongs to the RimP family.

It is found in the cytoplasm. Required for maturation of 30S ribosomal subunits. The polypeptide is Ribosome maturation factor RimP (Borrelia turicatae (strain 91E135)).